A 370-amino-acid polypeptide reads, in one-letter code: Sodium-dependent organic anion transporter (370 aa).

The tract at residues 1-24 is disordered; sequence MSADCEGNSTCPANSTEEDPPVGM. At 1–32 the chain is on the extracellular side; sequence MSADCEGNSTCPANSTEEDPPVGMEGQGSLKL. Residues asparagine 8 and asparagine 14 are each glycosylated (N-linked (GlcNAc...) asparagine). The chain crosses the membrane as a helical span at residues 33-53; it reads VFTVLSAVMVGLVMFSFGCSV. The Cytoplasmic portion of the chain corresponds to 54-67; the sequence is ESRKLWLHLRRPWG. The chain crosses the membrane as a helical span at residues 68 to 88; it reads IAVGLLCQFGLMPLTAYLLAI. Residues 89–97 are Extracellular-facing; that stretch reads GFGLKPFQA. A helical membrane pass occupies residues 98–118; sequence IAVLIMGSCPGGTVSNVLTFW. Over 119 to 126 the chain is Cytoplasmic; sequence VDGDMDLS. Residues 127 to 147 traverse the membrane as a helical segment; sequence ISMTTCSTVAALGMMPLCLYV. The Extracellular segment spans residues 148–159; the sequence is YTRSWTLPQSLT. The helical transmembrane segment at 160–180 threads the bilayer; it reads IPYQSIGITLVSLVVPVASGI. The Cytoplasmic portion of the chain corresponds to 181 to 195; it reads YVNYRWPKQATFILK. The helical transmembrane segment at 196–216 threads the bilayer; sequence VGAAVGGMLLLVVAVTGVVLA. Topologically, residues 217–224 are extracellular; sequence KGWNIDVT. A helical transmembrane segment spans residues 225-245; sequence LLVISCIFPLVGHVMGFLLAF. The Cytoplasmic portion of the chain corresponds to 246-265; sequence LTHQSWQRCRTISIETGAQN. A helical transmembrane segment spans residues 266 to 283; that stretch reads IQLCIAMMQLSFSAEYLV. A topological domain (extracellular) is located at residue glutamine 284. A helical transmembrane segment spans residues 285–305; it reads LLNFALAYGLFQVLHGLLIVA. Over 306–370 the chain is Cytoplasmic; sequence AYQAYKRRQK…ELTSHVPSCE (65 aa).

It belongs to the bile acid:sodium symporter (BASS) (TC 2.A.28) family. In terms of processing, glycosylated. In terms of tissue distribution, highly expressed in heart, lung, spleen and adrenal gland. Moderately expressed in skeletal muscle, testis and small intestine.

It is found in the membrane. It catalyses the reaction estrone 3-sulfate(out) + 2 Na(+)(out) = estrone 3-sulfate(in) + 2 Na(+)(in). The catalysed reaction is 17beta-estradiol 3-sulfate(out) + 2 Na(+)(out) = 17beta-estradiol 3-sulfate(in) + 2 Na(+)(in). It carries out the reaction dehydroepiandrosterone 3-sulfate(out) + 2 Na(+)(out) = dehydroepiandrosterone 3-sulfate(in) + 2 Na(+)(in). The enzyme catalyses androst-5-ene-diol 3-sulfate(out) + 2 Na(+)(out) = androst-5-ene-diol 3-sulfate(in) + 2 Na(+)(in). It catalyses the reaction pregnenolone sulfate(out) + 2 Na(+)(out) = pregnenolone sulfate(in) + 2 Na(+)(in). The catalysed reaction is taurolithocholate 3-sulfate(out) + 2 Na(+)(out) = taurolithocholate 3-sulfate(in) + 2 Na(+)(in). It carries out the reaction androsterone 3alpha-sulfate(out) + 2 Na(+)(out) = androsterone 3alpha-sulfate(in) + 2 Na(+)(in). The enzyme catalyses 5alpha-dihydrotestosterone sulfate(out) + 2 Na(+)(out) = 5alpha-dihydrotestosterone sulfate(in) + 2 Na(+)(in). It catalyses the reaction 17beta-estradiol 17-sulfate(out) + 2 Na(+)(out) = 17beta-estradiol 17-sulfate(in) + 2 Na(+)(in). The catalysed reaction is 17alpha-hydroxypregnenolone 3-sulfate(out) + 2 Na(+)(out) = 17alpha-hydroxypregnenolone 3-sulfate(in) + 2 Na(+)(in). It carries out the reaction epiandrosterone 3-sulfate(out) + 2 Na(+)(out) = epiandrosterone 3-sulfate(in) + 2 Na(+)(in). The enzyme catalyses epitestosterone 17-sulfate(out) + 2 Na(+)(out) = epitestosterone 17-sulfate(in) + 2 Na(+)(in). It catalyses the reaction testosterone 17-sulfate(out) + 2 Na(+)(out) = testosterone 17-sulfate(in) + 2 Na(+)(in). The catalysed reaction is 16alpha-hydroxydehydroepiandrosterone 3-sulfate(out) + 2 Na(+)(out) = 16alpha-hydroxydehydroepiandrosterone 3-sulfate(in) + 2 Na(+)(in). Transports sulfoconjugated steroid hormones from the extracellular compartment into the cytosol in a sodium-dependent manner without hydrolysis. Steroid sulfate hormones are commonly considered to be biologically inactive metabolites, that may be activated by steroid sulfatases into free steroids. May play an important role by delivering sulfoconjugated steroids to specific target cells in reproductive organs. May play a role transporting the estriol precursor 16alpha-hydroxydehydroepiandrosterone 3-sulfate (16a-OH-DHEAS) at the fetal blood vessel endothelium. Can also transport other sulfoconjugated molecules such as taurolithocholic acid-3-sulfate and sulfoconjugated pyrenes. The chain is Sodium-dependent organic anion transporter (Slc10a6) from Rattus norvegicus (Rat).